The primary structure comprises 400 residues: MVKVQSIQSQAVHAEERAHEADHPSSQVALFGADQPLRLDCGVDLAPFQIAYQTYGALNADKSNAILVCHALTGDQHVANIHPVTGKPGWWQTLVGPGKPLDPERFFIICSNVIGSCMGSTGPSSTNPLTGKPWGLDFPIITIPDMVRAQAMLIDRLGIDRLFCVVGGSMGGMQTLQWSVAYPKRVASALAIACSTRHSAQNIAFHELGRQAVMADPEWHHGRYYEEGSYPHRGLGVARMAAHITYLSDAALHRKFGRRMQDRELPTFSFDADFQVESYLRYQGSSFVERFDANSYLYLTRAMDYFDIAADHDGVLAEAFRDTTTRFCVVSFTSDWLFPTSESRNVVHALNAGGARVSFAEIETDRGHDAFLLDVPEFVDIVRAFLQSAGVAHGLAGKGH.

Polar residues predominate over residues 1 to 11; it reads MVKVQSIQSQA. Residues 1-24 are disordered; that stretch reads MVKVQSIQSQAVHAEERAHEADHP. Positions 13–23 are enriched in basic and acidic residues; the sequence is HAEERAHEADH. The AB hydrolase-1 domain occupies 64–373; the sequence is NAILVCHALT…TDRGHDAFLL (310 aa). S169 acts as the Nucleophile in catalysis. R239 lines the substrate pocket. Catalysis depends on residues D335 and H368. Substrate is bound at residue D369.

This sequence belongs to the AB hydrolase superfamily. MetX family. Homodimer.

The protein localises to the cytoplasm. The catalysed reaction is L-homoserine + acetyl-CoA = O-acetyl-L-homoserine + CoA. It functions in the pathway amino-acid biosynthesis; L-methionine biosynthesis via de novo pathway; O-acetyl-L-homoserine from L-homoserine: step 1/1. Transfers an acetyl group from acetyl-CoA to L-homoserine, forming acetyl-L-homoserine. This Rhodopseudomonas palustris (strain BisB18) protein is Homoserine O-acetyltransferase.